We begin with the raw amino-acid sequence, 118 residues long: Small ribosomal subunit protein uS13 (118 aa).

A disordered region spans residues 93-118 (KGLPVRGQRTKTNARTRKGPRKPIRK).

Belongs to the universal ribosomal protein uS13 family. In terms of assembly, part of the 30S ribosomal subunit. Forms a loose heterodimer with protein S19. Forms two bridges to the 50S subunit in the 70S ribosome.

In terms of biological role, located at the top of the head of the 30S subunit, it contacts several helices of the 16S rRNA. In the 70S ribosome it contacts the 23S rRNA (bridge B1a) and protein L5 of the 50S subunit (bridge B1b), connecting the 2 subunits; these bridges are implicated in subunit movement. Contacts the tRNAs in the A and P-sites. The sequence is that of Small ribosomal subunit protein uS13 from Ectopseudomonas mendocina (strain ymp) (Pseudomonas mendocina).